A 398-amino-acid polypeptide reads, in one-letter code: Phosphoglycerate kinase (398 aa).

Residues 21–23 (DFN), arginine 36, 59–62 (HLGR), arginine 119, and arginine 157 contribute to the substrate site. Residues lysine 208, glycine 296, glutamate 327, and 354-357 (GGDS) contribute to the ATP site.

It belongs to the phosphoglycerate kinase family. In terms of assembly, monomer.

The protein resides in the cytoplasm. The enzyme catalyses (2R)-3-phosphoglycerate + ATP = (2R)-3-phospho-glyceroyl phosphate + ADP. The protein operates within carbohydrate degradation; glycolysis; pyruvate from D-glyceraldehyde 3-phosphate: step 2/5. This Streptococcus uberis (strain ATCC BAA-854 / 0140J) protein is Phosphoglycerate kinase.